The primary structure comprises 176 residues: ATP synthase subunit d, mitochondrial (176 aa).

F-type ATP synthases have 2 components, the catalytic core F(1) and the membrane-embedded component F(0), linked together by a central stalk and a peripheral stalk. The central stalk, also called rotor shaft, is often seen as part of F(1). The peripheral stalk is seen as part of F(0). F(0) contains the membrane channel next to the rotor. F-type ATP synthases form dimers but each monomer functions independently in ATP generation. The dimer consists of 17 different polypeptides: ATP1 (subunit alpha, 3 molecules per monomer, part of F(1)), ATP2 (subunit beta, 3 copies per monomer, part of F(1)), ATP3 (subunit gamma, part of the central stalk), ATP4 (subunit b, part of the peripheral stalk), ATP5/OSCP (subunit 5/OSCP, part of the peripheral stalk), ATP6 (subunit a, part of the peripheral stalk), ATP7 (subunit d, part of the peripheral stalk), ATP8 (subunit 8, part of the peripheral stalk), OLI1 (subunit c, part of the rotor, 10 molecules per monomer), ATP14 (subunit h, part of the peripheral stalk), ATP15 (subunit epsilon, part of the central stalk), ATP16 (subunit delta, part of the central stalk), ATP17 (subunit f, part of the peripheral stalk), ATP18 (subunit i/j, part of the peripheral stalk), ATP19 (subunit k, dimer-specific, at interface between monomers), ATP20 (subunit g, at interface between monomers), TIM11 (subunit e, at interface between monomers).

It localises to the mitochondrion inner membrane. Mitochondrial membrane ATP synthase (F(1)F(0) ATP synthase or Complex V) produces ATP from ADP in the presence of a proton gradient across the membrane which is generated by electron transport complexes of the respiratory chain. F-type ATP synthases consist of two structural domains, F(1) - containing the extramembraneous catalytic core, and F(0) - containing the membrane proton channel, linked together by a central stalk and a peripheral stalk. During catalysis, ATP synthesis in the catalytic domain of F(1) is coupled via a rotary mechanism of the central stalk subunits to proton translocation. Part of the complex F(0) domain and the peripheral stalk, which acts as a stator to hold the catalytic alpha/ATP1(3)beta/ATP2(3) subcomplex and subunit a/ATP6 static relative to the rotary elements. In Yarrowia lipolytica (strain CLIB 122 / E 150) (Yeast), this protein is ATP synthase subunit d, mitochondrial.